An 89-amino-acid polypeptide reads, in one-letter code: MEYQYPLDYDWSNEEMVTIVKFYEAIEKAYEKGIVREELMGLYRRFKEIVPSKAEEKKIDKEFQEVSGYSIYRAIQKAKEIEEEKLVKM.

This sequence belongs to the UPF0223 family.

The chain is UPF0223 protein BCE_4008 from Bacillus cereus (strain ATCC 10987 / NRS 248).